The primary structure comprises 617 residues: Autophagy-related protein 20 (617 aa).

Residues 1 to 83 form a disordered region; that stretch reads MWNDEDNNPY…KRKPGGYDSR (83 aa). Over residues 20–31 the composition is skewed to low complexity; it reads QSSSINPTSPST. A compositionally biased stretch (basic and acidic residues) spans 48 to 58; that stretch reads DNEHNHGVIHD. The segment covering 59–68 has biased composition (acidic residues); it reads DSDDDDEDLT. One can recognise a PX domain in the interval 89-209; the sequence is YENPKLSILI…RFFDPNASWS (121 aa). Positions 126, 128, 152, and 175 each coordinate a 1,2-diacyl-sn-glycero-3-phospho-(1D-myo-inositol-3-phosphate). Positions 403–440 form a coiled coil; the sequence is QQDLTTEELSKKRALLDQLEQSEAEARRIENYLSSSQQ. The segment at 434–516 is disordered; sequence YLSSSQQISP…SGNSITNKIF (83 aa). Basic and acidic residues predominate over residues 454-463; that stretch reads PPSHQRRDGS. A compositionally biased stretch (polar residues) spans 480 to 500; that stretch reads DFSSHTPSASQGLPERSTSVP.

This sequence belongs to the sorting nexin family. In terms of assembly, forms a complex with SNX4/ATG24 and ATG17.

It is found in the endosome membrane. It localises to the preautophagosomal structure membrane. Its function is as follows. Required for cytoplasm to vacuole transport (Cvt), pexophagy and mitophagy. Also involved in endoplasmic reticulum-specific autophagic process and is essential for the survival of cells subjected to severe ER stress. Functions in protein retrieval from the endocytic pathway. Required for proper sorting of the v-SNARE protein SNC1. Autophagy is required for proper vegetative growth, asexual/sexual reproduction, and full virulence. Autophagy is particularly involved in the biosynthesis of deoxynivalenol (DON), an important virulence determinant. The chain is Autophagy-related protein 20 from Gibberella zeae (strain ATCC MYA-4620 / CBS 123657 / FGSC 9075 / NRRL 31084 / PH-1) (Wheat head blight fungus).